We begin with the raw amino-acid sequence, 647 residues long: Solute carrier family 23 member 2 (647 aa).

The segment covering 1-11 (MMGVGKNTSKS) has biased composition (polar residues). The segment at 1 to 26 (MMGVGKNTSKSVEVGGSTEGKYEEEA) is disordered. At 8–109 (TSKSVEVGGS…LCIFLGLQHY (102 aa)) the chain is on the cytoplasmic side. The residue at position 69 (Ser-69) is a Phosphoserine. Position 74 is a phosphothreonine (Thr-74). Ser-77 bears the Phosphoserine mark. The residue at position 78 (Thr-78) is a Phosphothreonine. Ser-80 is subject to Phosphoserine. A helical transmembrane segment spans residues 110–130 (LTCFSGTIAVPFLLADAMCVG). Residues 131–138 (DDQWATSQ) are Extracellular-facing. Residues 139–159 (LIGTIFFCVGITTLLQTTFGC) form a helical membrane-spanning segment. Position 160 (Arg-160) is a topological domain, cytoplasmic. Residues 161 to 181 (LPLFQASAFAFLAPARAILSL) form a helical membrane-spanning segment. At 182 to 215 (DKWKCNTTEITVANGTAELLEHIWHPRIQEIQGA) the chain is on the extracellular side. 2 N-linked (GlcNAc...) asparagine glycosylation sites follow: Asn-187 and Asn-195. Residues 216 to 236 (IIMSSLIEVVIGLLGLPGALL) traverse the membrane as a helical segment. Over 237 to 263 (RYIGPLTITPTVALIGLSGFQAAGERA) the chain is Cytoplasmic. The chain crosses the membrane as a helical span at residues 264–281 (GKHWGIAMLTIFLVLLFS). The Extracellular portion of the chain corresponds to 282 to 285 (QYAR). Positions 286-299 (NVKFPLPIYKSKKG) form an intramembrane region, helical. Topologically, residues 300-306 (WTAYKLQ) are extracellular. A helical membrane pass occupies residues 307–327 (LFKMFPIILAILVSWLLCFIF). Topologically, residues 328 to 368 (TVTDVFPSNSTDYGYYARTDARKGVLLVAPWFKVPYPFQWG) are cytoplasmic. The helical transmembrane segment at 369–389 (MPTVSAAGVIGMLSAVVASII) threads the bilayer. The Extracellular portion of the chain corresponds to 390–414 (ESIGDYYACARLSCAPPPPIHAINR). A helical membrane pass occupies residues 415 to 435 (GIFVEGLSCVLDGVFGTGNGS). Topologically, residues 436-458 (TSSSPNIGVLGITKVGSRRVIQY) are cytoplasmic. A helical membrane pass occupies residues 459–479 (GAALMLGLGMIGKFSALFASL). The Extracellular portion of the chain corresponds to 480-482 (PDP). The chain crosses the membrane as a helical span at residues 483-503 (VLGALFCTLFGMITAVGLSNL). At 504 to 513 (QFIDLNSSRN) the chain is on the cytoplasmic side. The chain crosses the membrane as a helical span at residues 514–534 (LFVLGFSIFFGLVLPSYLRQN). Residues 535 to 544 (PLVTGITGID) are Extracellular-facing. The helical transmembrane segment at 545–565 (QVLNVLLTTAMFVGGCVAFIL) threads the bilayer. Topologically, residues 566-647 (DNTIPGTPEE…SSDKDSQATV (82 aa)) are cytoplasmic. The residue at position 646 (Thr-646) is a Phosphothreonine.

It belongs to the nucleobase:cation symporter-2 (NCS2) (TC 2.A.40) family. Interacts with CLSTN3. In terms of processing, phosphorylated. In terms of tissue distribution, highly expressed in neural, neuroendocrine, exocrine and endothelial tissues and in osteoblasts. Detected in neurons throughout the central nervous system, in meninges and choroid plexus, in the anterior pituitary, the intermediate lobe, in pancreas, adrenal cortex, gastric glands, and in the inner nuclear layer of the retina.

It is found in the cell membrane. It catalyses the reaction L-ascorbate(out) + 2 Na(+)(out) = L-ascorbate(in) + 2 Na(+)(in). Sodium/ascorbate cotransporter. Mediates electrogenic uptake of vitamin C, with a stoichiometry of 2 Na(+) for each ascorbate. The chain is Solute carrier family 23 member 2 (Slc23a2) from Rattus norvegicus (Rat).